Here is a 352-residue protein sequence, read N- to C-terminus: Thrombopoietin (352 aa).

The N-terminal stretch at 1 to 23 (MELTELLLVVMLLLTARLDPCLP) is a signal peptide. 2 disulfide bridges follow: Cys-28–Cys-172 and Cys-50–Cys-106. Asn-185, Asn-197, Asn-206, Asn-234, and Asn-255 each carry an N-linked (GlcNAc...) asparagine glycan. Residues 233–245 (LNQTSRSLNQTPG) show a composition bias toward polar residues. 2 disordered regions span residues 233-259 (LNQT…GTHG) and 292-352 (YSPS…SQEE). Over residues 311–327 (PTSPTPQNPLQPPPPDP) the composition is skewed to pro residues. Asn-332 and Asn-347 each carry an N-linked (GlcNAc...) asparagine glycan.

The protein belongs to the EPO/TPO family.

It localises to the secreted. In terms of biological role, lineage-specific cytokine affecting the proliferation and maturation of megakaryocytes from their committed progenitor cells. It acts at a late stage of megakaryocyte development. It may be the major physiological regulator of circulating platelets. The protein is Thrombopoietin (THPO) of Canis lupus familiaris (Dog).